A 263-amino-acid polypeptide reads, in one-letter code: Undecaprenyl-diphosphatase 2 (263 aa).

8 consecutive transmembrane segments (helical) span residues 15–37 (GLTE…LLGF), 42–62 (AKVF…VIFW), 83–103 (LHII…HSAI), 106–126 (VLFG…LMIV), 142–162 (ITYK…WPGF), 183–203 (AEYT…LDLI), 216–236 (LFAT…VSFL), and 242–262 (VKLT…YFFI).

Belongs to the UppP family.

It localises to the cell membrane. It carries out the reaction di-trans,octa-cis-undecaprenyl diphosphate + H2O = di-trans,octa-cis-undecaprenyl phosphate + phosphate + H(+). Functionally, catalyzes the dephosphorylation of undecaprenyl diphosphate (UPP). Confers resistance to bacitracin. The sequence is that of Undecaprenyl-diphosphatase 2 from Bacillus cereus (strain ATCC 10987 / NRS 248).